The primary structure comprises 393 residues: Glucose-1-phosphate adenylyltransferase (393 aa).

Residues Y105, G170, 185–186 (EK), and S196 contribute to the alpha-D-glucose 1-phosphate site.

It belongs to the bacterial/plant glucose-1-phosphate adenylyltransferase family. As to quaternary structure, homotetramer.

The enzyme catalyses alpha-D-glucose 1-phosphate + ATP + H(+) = ADP-alpha-D-glucose + diphosphate. It participates in glycan biosynthesis; glycogen biosynthesis. Functionally, involved in the biosynthesis of ADP-glucose, a building block required for the elongation reactions to produce glycogen. Catalyzes the reaction between ATP and alpha-D-glucose 1-phosphate (G1P) to produce pyrophosphate and ADP-Glc. In Clostridium perfringens (strain 13 / Type A), this protein is Glucose-1-phosphate adenylyltransferase.